The chain runs to 683 residues: DNA ligase (683 aa).

NAD(+)-binding positions include 29–33 (DAEFD), 79–80 (SL), and glutamate 109. The active-site N6-AMP-lysine intermediate is lysine 111. Arginine 132, glutamate 172, lysine 288, and lysine 312 together coordinate NAD(+). Zn(2+) is bound by residues cysteine 406, cysteine 409, cysteine 425, and cysteine 431. Positions 595–683 (SVPRTLAGVT…GPPAEAGEPT (89 aa)) constitute a BRCT domain.

This sequence belongs to the NAD-dependent DNA ligase family. LigA subfamily. Requires Mg(2+) as cofactor. The cofactor is Mn(2+).

The catalysed reaction is NAD(+) + (deoxyribonucleotide)n-3'-hydroxyl + 5'-phospho-(deoxyribonucleotide)m = (deoxyribonucleotide)n+m + AMP + beta-nicotinamide D-nucleotide.. Its function is as follows. DNA ligase that catalyzes the formation of phosphodiester linkages between 5'-phosphoryl and 3'-hydroxyl groups in double-stranded DNA using NAD as a coenzyme and as the energy source for the reaction. It is essential for DNA replication and repair of damaged DNA. The chain is DNA ligase from Mycobacterium ulcerans (strain Agy99).